We begin with the raw amino-acid sequence, 119 residues long: UPF0102 protein CGSHiGG_01960 (119 aa).

Belongs to the UPF0102 family.

The sequence is that of UPF0102 protein CGSHiGG_01960 from Haemophilus influenzae (strain PittGG).